We begin with the raw amino-acid sequence, 232 residues long: Pseudaminic acid cytidylyltransferase (232 aa).

It belongs to the CMP-NeuNAc synthase family. Mg(2+) serves as cofactor.

It carries out the reaction pseudaminate + CTP = CMP-pseudaminate + diphosphate. In terms of biological role, catalyzes the final step in the biosynthesis of pseudaminic acid, a sialic-acid-like sugar that is used to modify flagellin. Mediates the activation of pseudaminic acid with CMP by forming CMP-pseudaminic acid. The protein is Pseudaminic acid cytidylyltransferase (pseF) of Campylobacter jejuni subsp. jejuni serotype O:23/36 (strain 81-176).